Consider the following 267-residue polypeptide: MQDWEKLLQDDYLEIAGRKFKSRLIIGSGKFKDFQQTKEVLEASGAEIITVAVRRVNITDPTKENLLDYIDPKKYLILPNTAGCYTAEEAIKTAMMAREATGINWVKLEVIGDQKTLLPDMEETYKAAKVLVKEGFVVLPYIFDDPVFAKKFEDIGCAAVMPLAAPIGSGLGLQNPYNLIFIKEAVSVPVIVDAGIGSATDIPPVMELGVDGVLTNTALAEAKDPIKMAVAMKYATIAGRLAYLAGRMPKRTYAVPSSPTKGVPFKG.

The active-site Schiff-base intermediate with DXP is Lys-107. 1-deoxy-D-xylulose 5-phosphate is bound by residues Gly-168, 194–195 (AG), and 216–217 (NT).

Belongs to the ThiG family. As to quaternary structure, homotetramer. Forms heterodimers with either ThiH or ThiS.

The protein localises to the cytoplasm. It carries out the reaction [ThiS sulfur-carrier protein]-C-terminal-Gly-aminoethanethioate + 2-iminoacetate + 1-deoxy-D-xylulose 5-phosphate = [ThiS sulfur-carrier protein]-C-terminal Gly-Gly + 2-[(2R,5Z)-2-carboxy-4-methylthiazol-5(2H)-ylidene]ethyl phosphate + 2 H2O + H(+). Its pathway is cofactor biosynthesis; thiamine diphosphate biosynthesis. In terms of biological role, catalyzes the rearrangement of 1-deoxy-D-xylulose 5-phosphate (DXP) to produce the thiazole phosphate moiety of thiamine. Sulfur is provided by the thiocarboxylate moiety of the carrier protein ThiS. In vitro, sulfur can be provided by H(2)S. The polypeptide is Thiazole synthase (Aquifex aeolicus (strain VF5)).